The following is a 504-amino-acid chain: Maturase K (504 aa).

It belongs to the intron maturase 2 family. MatK subfamily.

Its subcellular location is the plastid. It localises to the chloroplast. Usually encoded in the trnK tRNA gene intron. Probably assists in splicing its own and other chloroplast group II introns. This Betula papyrifera (Paper birch) protein is Maturase K.